We begin with the raw amino-acid sequence, 59 residues long: UPF0391 membrane protein lpl2443 (59 aa).

2 consecutive transmembrane segments (helical) span residues 5 to 25 and 30 to 50; these read ALIF…GIAV and IAKI…IMGL.

Belongs to the UPF0391 family.

It localises to the cell membrane. This Legionella pneumophila (strain Lens) protein is UPF0391 membrane protein lpl2443.